The primary structure comprises 470 residues: 5-hydroxytryptamine receptor 2A (470 aa).

The Extracellular portion of the chain corresponds to 1-80; it reads MDVLCEENTS…LQEKNWSALL (80 aa). Residues N8, N38, N44, N51, N54, and N75 are each glycosylated (N-linked (GlcNAc...) asparagine). A helical transmembrane segment spans residues 81-97; sequence TAVVIILTIAGNILVIM. Residues 98 to 111 are Cytoplasmic-facing; sequence AVSLEKKLQNATNY. A helical transmembrane segment spans residues 112 to 137; sequence FLMSLAIADMLLGFLVMPVSMLTILY. The Extracellular portion of the chain corresponds to 138–146; sequence GYRWPLPSK. A helical transmembrane segment spans residues 147 to 171; it reads LCAVWIYLDVLFSTASIMHLCAISL. Cysteines 148 and 227 form a disulfide. Serotonin is bound at residue D155. A DRY motif; important for ligand-induced conformation changes motif is present at residues 172–174; sequence DRY. The Cytoplasmic portion of the chain corresponds to 172-191; that stretch reads DRYVAIQNPIHHRRFNSRTK. The helical transmembrane segment at 192 to 215 threads the bilayer; the sequence is AFLKIIAVWTISVGISMPIPVFGL. Topologically, residues 216–232 are extracellular; that stretch reads QDDSKVFKEGSCLLADD. A helical transmembrane segment spans residues 233 to 258; it reads NFVLIGSFVSFFIPLTIMVITYFLTI. Residues 259–321 lie on the Cytoplasmic side of the membrane; that stretch reads KSLQKEATLC…QSISNEQKAC (63 aa). S280 bears the Phosphoserine mark. The chain crosses the membrane as a helical span at residues 322–347; the sequence is KVLGIVFFLFVVMWCPFFITNIMAVI. N342 is a serotonin binding site. Cysteines 348 and 352 form a disulfide. Residues 348-355 lie on the Extracellular side of the membrane; that stretch reads CKESCNED. A helical membrane pass occupies residues 356–381; the sequence is VIGALLNVFVWIGYLSSAVNPLVYTL. Residues 375-379 carry the NPxxY motif; important for ligand-induced conformation changes and signaling motif; it reads NPLVY. Over 382–470 the chain is Cytoplasmic; the sequence is FNKTYRSAFS…NTVNEKVSCV (89 aa). The segment at 448 to 470 is disordered; sequence GKQHSEDAPADNSNTVNEKVSCV. Residues 458-470 are compositionally biased toward polar residues; that stretch reads DNSNTVNEKVSCV. The PDZ-binding motif lies at 468–470; sequence SCV.

The protein belongs to the G-protein coupled receptor 1 family. As to quaternary structure, interacts (via C-terminus) with MPDZ and PATJ. May interact (via C-terminus) with MPP3, PRDX6, DLG4, DLG1, CASK, APBA1 and MAGI2. Interacts with GRM2 and DRD2; this may affect signaling.

The protein localises to the cell membrane. It localises to the cell projection. It is found in the dendrite. The protein resides in the axon. Its subcellular location is the cytoplasmic vesicle. The protein localises to the membrane. It localises to the caveola. It is found in the presynapse. Its activity is regulated as follows. G-protein coupled receptor activity is regulated by lipids: oleamide increases HTR2A-mediated activity. G-protein coupled receptor for 5-hydroxytryptamine (serotonin). Also functions as a receptor for various drugs and psychoactive substances, including mescaline, psilocybin, 1-(2,5-dimethoxy-4-iodophenyl)-2-aminopropane (DOI) and lysergic acid diethylamide (LSD). Ligand binding causes a conformation change that triggers signaling via guanine nucleotide-binding proteins (G proteins) and modulates the activity of downstream effectors. HTR2A is coupled to G(q)/G(11) G alpha proteins and activates phospholipase C-beta, releasing diacylglycerol (DAG) and inositol 1,4,5-trisphosphate (IP3) second messengers that modulate the activity of phosphatidylinositol 3-kinase and promote the release of Ca(2+) ions from intracellular stores, respectively. Beta-arrestin family members inhibit signaling via G proteins and mediate activation of alternative signaling pathways. Affects neural activity, perception, cognition and mood. Plays a role in the regulation of behavior, including responses to anxiogenic situations and psychoactive substances. Plays a role in intestinal smooth muscle contraction, and may play a role in arterial vasoconstriction. The chain is 5-hydroxytryptamine receptor 2A (HTR2A) from Sus scrofa (Pig).